A 274-amino-acid polypeptide reads, in one-letter code: Glycerol uptake facilitator protein (274 aa).

2 consecutive transmembrane segments (helical) span residues 3–23 and 38–58; these read AFWG…GVCA and IVVV…VGGI. An NPA 1 motif is present at residues 64–66; the sequence is NPA. Helical transmembrane passes span 82 to 102, 131 to 151, and 164 to 184; these read VPVY…IIYL, FANV…ILAI, and IVGF…GYAI. Residues 185-187 carry the NPA 2 motif; it reads NPA. A helical transmembrane segment spans residues 238 to 258; sequence ITSSFWIVSVILVVVLLGLYV.

Belongs to the MIP/aquaporin (TC 1.A.8) family.

Its subcellular location is the cell membrane. It carries out the reaction glycerol(in) = glycerol(out). Functionally, mediates glycerol diffusion across the cytoplasmic membrane via a pore-type mechanism. The protein is Glycerol uptake facilitator protein (glpF) of Bacillus subtilis (strain 168).